A 158-amino-acid polypeptide reads, in one-letter code: 2-C-methyl-D-erythritol 2,4-cyclodiphosphate synthase (158 aa).

Residues D9 and H11 each contribute to the a divalent metal cation site. 4-CDP-2-C-methyl-D-erythritol 2-phosphate-binding positions include 9 to 11 (DVH) and 35 to 36 (HS). H43 contacts a divalent metal cation. 4-CDP-2-C-methyl-D-erythritol 2-phosphate-binding positions include 57-59 (DIG), 62-66 (FPDTD), 101-107 (AQKPKML), 133-136 (TTTE), F140, and R143.

The protein belongs to the IspF family. In terms of assembly, homotrimer. A divalent metal cation serves as cofactor.

The catalysed reaction is 4-CDP-2-C-methyl-D-erythritol 2-phosphate = 2-C-methyl-D-erythritol 2,4-cyclic diphosphate + CMP. It functions in the pathway isoprenoid biosynthesis; isopentenyl diphosphate biosynthesis via DXP pathway; isopentenyl diphosphate from 1-deoxy-D-xylulose 5-phosphate: step 4/6. Functionally, involved in the biosynthesis of isopentenyl diphosphate (IPP) and dimethylallyl diphosphate (DMAPP), two major building blocks of isoprenoid compounds. Catalyzes the conversion of 4-diphosphocytidyl-2-C-methyl-D-erythritol 2-phosphate (CDP-ME2P) to 2-C-methyl-D-erythritol 2,4-cyclodiphosphate (ME-CPP) with a corresponding release of cytidine 5-monophosphate (CMP). This chain is 2-C-methyl-D-erythritol 2,4-cyclodiphosphate synthase, found in Bacillus subtilis (strain 168).